Consider the following 396-residue polypeptide: Phosphoglycerate kinase (396 aa).

Substrate is bound by residues 21–23 (DFN), arginine 36, 59–62 (HLGR), arginine 119, and arginine 156. ATP contacts are provided by residues lysine 207, glutamate 325, and 352–355 (GGDS).

It belongs to the phosphoglycerate kinase family. Monomer.

The protein localises to the cytoplasm. The enzyme catalyses (2R)-3-phosphoglycerate + ATP = (2R)-3-phospho-glyceroyl phosphate + ADP. Its pathway is carbohydrate degradation; glycolysis; pyruvate from D-glyceraldehyde 3-phosphate: step 2/5. The protein is Phosphoglycerate kinase of Lacticaseibacillus casei (strain BL23) (Lactobacillus casei).